Here is a 459-residue protein sequence, read N- to C-terminus: Glutamyl-tRNA reductase (459 aa).

Substrate-binding positions include 49–52 (TCNR), serine 109, 114–116 (ETQ), and glutamine 120. Residue cysteine 50 is the Nucleophile of the active site. Residue 189–194 (GAGKMG) participates in NADP(+) binding.

It belongs to the glutamyl-tRNA reductase family. In terms of assembly, homodimer.

The catalysed reaction is (S)-4-amino-5-oxopentanoate + tRNA(Glu) + NADP(+) = L-glutamyl-tRNA(Glu) + NADPH + H(+). It functions in the pathway porphyrin-containing compound metabolism; protoporphyrin-IX biosynthesis; 5-aminolevulinate from L-glutamyl-tRNA(Glu): step 1/2. In terms of biological role, catalyzes the NADPH-dependent reduction of glutamyl-tRNA(Glu) to glutamate 1-semialdehyde (GSA). The polypeptide is Glutamyl-tRNA reductase (Halalkalibacterium halodurans (strain ATCC BAA-125 / DSM 18197 / FERM 7344 / JCM 9153 / C-125) (Bacillus halodurans)).